Here is a 446-residue protein sequence, read N- to C-terminus: Ubiquitin carboxyl-terminal hydrolase MINDY-3 (446 aa).

Cys-51 functions as the Nucleophile in the catalytic mechanism. Residues 117 to 128 show a composition bias toward basic and acidic residues; it reads DNSDITDSHPEP. The disordered stretch occupies residues 117-137; that stretch reads DNSDITDSHPEPESSQPTDTP. The Proton acceptor role is filled by His-288.

This sequence belongs to the MINDY deubiquitinase family. FAM188 subfamily.

Its subcellular location is the nucleus. The catalysed reaction is Thiol-dependent hydrolysis of ester, thioester, amide, peptide and isopeptide bonds formed by the C-terminal Gly of ubiquitin (a 76-residue protein attached to proteins as an intracellular targeting signal).. Functionally, hydrolase that can remove 'Lys-48'-linked conjugated ubiquitin from proteins. The sequence is that of Ubiquitin carboxyl-terminal hydrolase MINDY-3 (mindy3) from Danio rerio (Zebrafish).